A 517-amino-acid polypeptide reads, in one-letter code: Ribonuclease Y (517 aa).

A helical membrane pass occupies residues methionine 1–tyrosine 21. One can recognise a KH domain in the interval leucine 207–aspartate 273. Residues alanine 333–alanine 426 form the HD domain.

This sequence belongs to the RNase Y family.

The protein localises to the cell membrane. Its function is as follows. Endoribonuclease that initiates mRNA decay. This Campylobacter curvus (strain 525.92) protein is Ribonuclease Y.